The following is a 312-amino-acid chain: Olfactory receptor 1F1 (312 aa).

The Extracellular portion of the chain corresponds to 1–25 (MSGTNQSSVSEFLLLGLSRQPQQQH). N-linked (GlcNAc...) asparagine glycosylation occurs at Asn-5. The chain crosses the membrane as a helical span at residues 26 to 49 (LLFVFFLSMYLATVLGNLLIILSV). Residues 50 to 57 (SIDSCLHT) are Cytoplasmic-facing. Residues 58–79 (PMYFFLSNLSFVDICFSFTTVP) traverse the membrane as a helical segment. Residues 80–100 (KMLANHILETQTISFCGCLTQ) lie on the Extracellular side of the membrane. Cys-97 and Cys-189 are disulfide-bonded. The helical transmembrane segment at 101–120 (MYFVFMFVDMDNFLLAVMAY) threads the bilayer. Over 121–139 (DHFVAVCHPLHYTAKMTHQ) the chain is Cytoplasmic. A helical membrane pass occupies residues 140 to 158 (LCALLVAGLWVVANLNVLL). At 159–196 (HTLLMAPLSFCADNAITHFFCDVTPLLKLSCSDTHLNE) the chain is on the extracellular side. A helical membrane pass occupies residues 197-219 (VIILSEGALVMITPFLCILASYM). Topologically, residues 220–236 (HITCTVLKVPSTKGRWK) are cytoplasmic. A helical membrane pass occupies residues 237-259 (AFSTCGSHLAVVLLFYSTIIAVY). The Extracellular segment spans residues 260-272 (FNPLSSHSAEKDT). A helical transmembrane segment spans residues 273 to 292 (MATVLYTVVTPMLNPFIYSL). Residues 293–312 (RNRYLKGALKKVVGRVVFSV) lie on the Cytoplasmic side of the membrane.

This sequence belongs to the G-protein coupled receptor 1 family.

It is found in the cell membrane. Functionally, odorant receptor. This chain is Olfactory receptor 1F1 (OR1F1), found in Homo sapiens (Human).